Here is a 549-residue protein sequence, read N- to C-terminus: Oxygen-dependent choline dehydrogenase (549 aa).

An FAD-binding site is contributed by Asp-4–Glu-33. His-465 serves as the catalytic Proton acceptor. The segment at Lys-528–Arg-549 is disordered.

It belongs to the GMC oxidoreductase family. Requires FAD as cofactor.

It carries out the reaction choline + A = betaine aldehyde + AH2. The enzyme catalyses betaine aldehyde + NAD(+) + H2O = glycine betaine + NADH + 2 H(+). It participates in amine and polyamine biosynthesis; betaine biosynthesis via choline pathway; betaine aldehyde from choline (cytochrome c reductase route): step 1/1. Functionally, involved in the biosynthesis of the osmoprotectant glycine betaine. Catalyzes the oxidation of choline to betaine aldehyde and betaine aldehyde to glycine betaine at the same rate. In Agrobacterium fabrum (strain C58 / ATCC 33970) (Agrobacterium tumefaciens (strain C58)), this protein is Oxygen-dependent choline dehydrogenase.